An 83-amino-acid polypeptide reads, in one-letter code: Sec-independent protein translocase protein TatA (83 aa).

Residues Met1–Gly21 form a helical membrane-spanning segment. 2 stretches are compositionally biased toward basic and acidic residues: residues Glu47 to Ser57 and Ala71 to Val83. Positions Glu47–Val83 are disordered.

Belongs to the TatA/E family. The Tat system comprises two distinct complexes: a TatABC complex, containing multiple copies of TatA, TatB and TatC subunits, and a separate TatA complex, containing only TatA subunits. Substrates initially bind to the TatABC complex, which probably triggers association of the separate TatA complex to form the active translocon.

It localises to the cell inner membrane. Part of the twin-arginine translocation (Tat) system that transports large folded proteins containing a characteristic twin-arginine motif in their signal peptide across membranes. TatA could form the protein-conducting channel of the Tat system. This is Sec-independent protein translocase protein TatA from Shewanella woodyi (strain ATCC 51908 / MS32).